A 473-amino-acid chain; its full sequence is Photosystem II CP43 reaction center protein (473 aa).

A propeptide spanning residues 1 to 14 (MKTLYSPRRFYPVE) is cleaved from the precursor. Residue T15 is modified to N-acetylthreonine. T15 is subject to Phosphothreonine. The next 5 helical transmembrane spans lie at 69 to 93 (LFEV…PHLA), 134 to 155 (LIGP…KDRN), 178 to 200 (KALF…RKIT), 255 to 275 (KPFA…LSYS), and 291 to 312 (WFNN…ASQA). Position 367 (E367) interacts with [CaMn4O5] cluster. A helical transmembrane segment spans residues 447–471 (RARAAAAGFEKGIDRDLEPVLFMTP).

This sequence belongs to the PsbB/PsbC family. PsbC subfamily. In terms of assembly, PSII is composed of 1 copy each of membrane proteins PsbA, PsbB, PsbC, PsbD, PsbE, PsbF, PsbH, PsbI, PsbJ, PsbK, PsbL, PsbM, PsbT, PsbX, PsbY, PsbZ, Psb30/Ycf12, at least 3 peripheral proteins of the oxygen-evolving complex and a large number of cofactors. It forms dimeric complexes. The cofactor is Binds multiple chlorophylls and provides some of the ligands for the Ca-4Mn-5O cluster of the oxygen-evolving complex. It may also provide a ligand for a Cl- that is required for oxygen evolution. PSII binds additional chlorophylls, carotenoids and specific lipids..

The protein resides in the plastid. The protein localises to the chloroplast thylakoid membrane. Its function is as follows. One of the components of the core complex of photosystem II (PSII). It binds chlorophyll and helps catalyze the primary light-induced photochemical processes of PSII. PSII is a light-driven water:plastoquinone oxidoreductase, using light energy to abstract electrons from H(2)O, generating O(2) and a proton gradient subsequently used for ATP formation. This is Photosystem II CP43 reaction center protein from Gnetum parvifolium (Small-leaved jointfir).